A 313-amino-acid polypeptide reads, in one-letter code: Desiccation-related protein PCC13-62 (313 aa).

Residues 1-26 (MAQQPTFASAALVSFFLALICSCSYA) form the signal peptide.

The polypeptide is Desiccation-related protein PCC13-62 (Craterostigma plantagineum (Blue gem)).